Here is a 152-residue protein sequence, read N- to C-terminus: Transcriptional regulator MraZ (152 aa).

2 consecutive SpoVT-AbrB domains span residues 5-52 (ASAV…PLNQ) and 81-124 (ATEC…SESE).

Belongs to the MraZ family. In terms of assembly, forms oligomers.

Its subcellular location is the cytoplasm. It localises to the nucleoid. The polypeptide is Transcriptional regulator MraZ (Histophilus somni (strain 129Pt) (Haemophilus somnus)).